The primary structure comprises 245 residues: MSGHSKWHNIQAKKGKMDAKRGKIFTKIGKEIAVAVKEGGANLDGNSRLKDAVAKAKAANMPNDNIQRAIKKAAGEGDSVNYESIVYEGYGPSGVAVMVEVLTDNKNRSAGNVRSAFTKGGGNMGTSGCVGFMFQKKGEIVIEKAELDEDEIMMMALDAGAEDFASEEEVFIVTTSPEDFGTVREALEAEGLEFLEAAVKMIPDTETAINEDDAKKFQKMLDLLEDDDDVQEVYHNAEFPEGWDE.

Belongs to the TACO1 family.

Its subcellular location is the cytoplasm. The sequence is that of Probable transcriptional regulatory protein CPR_1922 from Clostridium perfringens (strain SM101 / Type A).